Reading from the N-terminus, the 95-residue chain is UPF0473 protein PEPE_1260 (95 aa).

Belongs to the UPF0473 family.

The chain is UPF0473 protein PEPE_1260 from Pediococcus pentosaceus (strain ATCC 25745 / CCUG 21536 / LMG 10740 / 183-1w).